We begin with the raw amino-acid sequence, 628 residues long: Netrin-4 (628 aa).

Residues 1–18 (MGSCARLLLLWGCTVVAA) form the signal peptide. The Laminin N-terminal domain occupies 30-261 (CEKACNPRMG…AIYDFIVKGS (232 aa)). N-linked (GlcNAc...) asparagine glycans are attached at residues Asn-56 and Asn-163. 12 disulfide bridges follow: Cys-262–Cys-271, Cys-264–Cys-293, Cys-295–Cys-304, Cys-307–Cys-329, Cys-332–Cys-341, Cys-334–Cys-359, Cys-362–Cys-371, Cys-374–Cys-392, Cys-395–Cys-413, Cys-397–Cys-420, Cys-422–Cys-431, and Cys-434–Cys-446. 3 Laminin EGF-like domains span residues 262-331 (CFCN…ECRT), 332-394 (CKCN…ACKP), and 395-448 (CSCH…GCRP). Asn-353 carries an N-linked (GlcNAc...) asparagine glycan. Asn-483 carries an N-linked (GlcNAc...) asparagine glycan. Intrachain disulfides connect Cys-506–Cys-576 and Cys-520–Cys-627. The NTR domain occupies 506–627 (CECKEQTLGN…KVMDILKREC (122 aa)).

As to quaternary structure, may form a homodimer. Expressed in kidney, spleen, mammary gland, aorta, heart, ovary, prostate and fetal spleen.

It is found in the secreted. Its subcellular location is the extracellular space. The protein localises to the extracellular matrix. It localises to the basement membrane. In terms of biological role, may play an important role in neural, kidney and vascular development. Promotes neurite elongation from olfactory bulb explants. This chain is Netrin-4 (NTN4), found in Homo sapiens (Human).